We begin with the raw amino-acid sequence, 295 residues long: Protoheme IX farnesyltransferase (295 aa).

9 helical membrane passes run 30 to 50 (LVVLTGVTGIIIAPGNIHPLI), 51 to 71 (AVISTLCIALGSGAAGAINMW), 93 to 115 (ISRSSALEVGLVLSFISVTIMMI), 119 to 136 (YISGILLAISIGFYIYVY), 148 to 168 (IVIGGAAGALPPIIGWTSVTG), 175 to 195 (LVLFLIIFMWTPPHFWALSLL), 219 to 239 (IHILVYSILLFPITLLPGLFL), 244 to 264 (LYEITAIPLGLMFVVQAFQVF), and 275 to 295 (MFTYSIIYLFILFTCIMLSSF).

Belongs to the UbiA prenyltransferase family. Protoheme IX farnesyltransferase subfamily.

It is found in the cell inner membrane. It catalyses the reaction heme b + (2E,6E)-farnesyl diphosphate + H2O = Fe(II)-heme o + diphosphate. It functions in the pathway porphyrin-containing compound metabolism; heme O biosynthesis; heme O from protoheme: step 1/1. Its function is as follows. Converts heme B (protoheme IX) to heme O by substitution of the vinyl group on carbon 2 of heme B porphyrin ring with a hydroxyethyl farnesyl side group. This is Protoheme IX farnesyltransferase from Ehrlichia ruminantium (strain Welgevonden).